A 795-amino-acid polypeptide reads, in one-letter code: Protocadherin beta-5 (795 aa).

An N-terminal signal peptide occupies residues 1–30; it reads METALAKTPQKRQVMFLAILLLLWEAGSEA. Residues 31–689 are Extracellular-facing; sequence VRYSIPEETE…AQADSLTVYL (659 aa). 5 consecutive Cadherin domains span residues 35–133, 138–242, 247–346, 351–450, and 455–560; these read IPEE…APEF, MLLK…APEF, YEVQ…APEL, LSSP…APAF, and YTLF…SPFV. N-linked (GlcNAc...) asparagine glycosylation is present at Asn169. Lys296 is subject to N6-acetyllysine. Asn417 and Asn435 each carry an N-linked (GlcNAc...) asparagine glycan. An N-linked (GlcNAc...) asparagine glycan is attached at Asn566. One can recognise a Cadherin 6 domain in the interval 567–670; the sequence is GSAPCTELVP…LVDGFSQPYL (104 aa). Residues 690–710 form a helical membrane-spanning segment; it reads VVALASVSSLFLFSVLLFVAV. At 711–795 the chain is on the cytoplasmic side; it reads RLCRRSRAAP…AAFRNSFGLN (85 aa).

The protein resides in the cell membrane. Functionally, potential calcium-dependent cell-adhesion protein. May be involved in the establishment and maintenance of specific neuronal connections in the brain. This is Protocadherin beta-5 (PCDHB5) from Homo sapiens (Human).